Here is a 602-residue protein sequence, read N- to C-terminus: ATP-dependent zinc metalloprotease FtsH 3 (602 aa).

Over 1–18 (MNSWFLQVSKRLGPAGRR) the chain is Cytoplasmic. A helical membrane pass occupies residues 19–39 (LWLLGFMGVVLAVTLGLALRA). Residues 40 to 117 (ARESATQRTA…DFASREDPSR (78 aa)) are Periplasmic-facing. Residues 118–138 (AASAVLPVVVLAAVGFALFTV) form a helical membrane-spanning segment. At 139 to 602 (SRRRSPKVFS…RRPRPEDQAA (464 aa)) the chain is on the cytoplasmic side. Position 202–209 (202–209 (GEPGTGKT)) interacts with ATP. Residue His-425 participates in Zn(2+) binding. The active site involves Glu-426. Zn(2+)-binding residues include His-429 and Asp-501.

It in the central section; belongs to the AAA ATPase family. In the C-terminal section; belongs to the peptidase M41 family. As to quaternary structure, homohexamer. Requires Zn(2+) as cofactor.

It is found in the cell inner membrane. Its function is as follows. Acts as a processive, ATP-dependent zinc metallopeptidase for both cytoplasmic and membrane proteins. Plays a role in the quality control of integral membrane proteins. The chain is ATP-dependent zinc metalloprotease FtsH 3 from Sorangium cellulosum (strain So ce56) (Polyangium cellulosum (strain So ce56)).